Here is a 224-residue protein sequence, read N- to C-terminus: Flagellar L-ring protein (224 aa).

The signal sequence occupies residues 1 to 15 (MARYFILAAALLLTA). The N-palmitoyl cysteine moiety is linked to residue Cys16. Cys16 is lipidated: S-diacylglycerol cysteine.

The protein belongs to the FlgH family. In terms of assembly, the basal body constitutes a major portion of the flagellar organelle and consists of four rings (L,P,S, and M) mounted on a central rod.

Its subcellular location is the cell outer membrane. It is found in the bacterial flagellum basal body. Assembles around the rod to form the L-ring and probably protects the motor/basal body from shearing forces during rotation. The protein is Flagellar L-ring protein of Shewanella sp. (strain MR-4).